The following is a 154-amino-acid chain: SsrA-binding protein (154 aa).

It belongs to the SmpB family.

It localises to the cytoplasm. Its function is as follows. Required for rescue of stalled ribosomes mediated by trans-translation. Binds to transfer-messenger RNA (tmRNA), required for stable association of tmRNA with ribosomes. tmRNA and SmpB together mimic tRNA shape, replacing the anticodon stem-loop with SmpB. tmRNA is encoded by the ssrA gene; the 2 termini fold to resemble tRNA(Ala) and it encodes a 'tag peptide', a short internal open reading frame. During trans-translation Ala-aminoacylated tmRNA acts like a tRNA, entering the A-site of stalled ribosomes, displacing the stalled mRNA. The ribosome then switches to translate the ORF on the tmRNA; the nascent peptide is terminated with the 'tag peptide' encoded by the tmRNA and targeted for degradation. The ribosome is freed to recommence translation, which seems to be the essential function of trans-translation. In Streptococcus thermophilus (strain CNRZ 1066), this protein is SsrA-binding protein.